Consider the following 189-residue polypeptide: Vacuolar iron transporter homolog 2 (189 aa).

At 1–10 (MARAQWLRAA) the chain is on the cytoplasmic side. Residues 11-31 (VLGANDGLVSVASLMIGIGAV) form a helical membrane-spanning segment. Over 32–38 (NENNKAM) the chain is Vacuolar. Residues 39–59 (LVSGLAGLVAGACSMAIGEFV) traverse the membrane as a helical segment. Topologically, residues 60 to 97 (SVYAQYDIEVTQIERDGDIDGADAAAAREKLPSPTQAA) are cytoplasmic. A helical transmembrane segment spans residues 98–118 (FASALAFAIGGLLPLLTSGFI). The Vacuolar segment spans residues 119–124 (KPWGPR). Residues 125-145 (VGVVCAASSVGLAGFGAAGGY) traverse the membrane as a helical segment. Over 146–159 (LGGANMVRSGTRVL) the chain is Cytoplasmic. A helical membrane pass occupies residues 160–180 (LGGWLAMLITYAVLRLFATIF). Residues 181–189 (HGMNISSSA) lie on the Vacuolar side of the membrane.

This sequence belongs to the CCC1 family.

Its subcellular location is the vacuole membrane. The catalysed reaction is Fe(2+)(in) = Fe(2+)(out). In terms of biological role, probable vacuolar iron transporter that may be involved in the regulation of iron distribution throughout the plant. The protein is Vacuolar iron transporter homolog 2 of Oryza sativa subsp. japonica (Rice).